The sequence spans 338 residues: Ketol-acid reductoisomerase (NADP(+)) (338 aa).

The region spanning 1–181 is the KARI N-terminal Rossmann domain; sequence MNVFYDKDAD…GGGRAGIIET (181 aa). NADP(+) contacts are provided by residues 24-27, Arg-47, and Ser-52; that span reads YGSQ. Residue His-107 is part of the active site. Gly-133 lines the NADP(+) pocket. Residues 182-327 enclose the KARI C-terminal knotted domain; sequence NFREETETDL…AKLRAMMPWI (146 aa). Residues Asp-190, Glu-194, Glu-226, and Glu-230 each coordinate Mg(2+). Position 251 (Ser-251) interacts with substrate.

It belongs to the ketol-acid reductoisomerase family. The cofactor is Mg(2+).

It carries out the reaction (2R)-2,3-dihydroxy-3-methylbutanoate + NADP(+) = (2S)-2-acetolactate + NADPH + H(+). It catalyses the reaction (2R,3R)-2,3-dihydroxy-3-methylpentanoate + NADP(+) = (S)-2-ethyl-2-hydroxy-3-oxobutanoate + NADPH + H(+). It functions in the pathway amino-acid biosynthesis; L-isoleucine biosynthesis; L-isoleucine from 2-oxobutanoate: step 2/4. Its pathway is amino-acid biosynthesis; L-valine biosynthesis; L-valine from pyruvate: step 2/4. Its function is as follows. Involved in the biosynthesis of branched-chain amino acids (BCAA). Catalyzes an alkyl-migration followed by a ketol-acid reduction of (S)-2-acetolactate (S2AL) to yield (R)-2,3-dihydroxy-isovalerate. In the isomerase reaction, S2AL is rearranged via a Mg-dependent methyl migration to produce 3-hydroxy-3-methyl-2-ketobutyrate (HMKB). In the reductase reaction, this 2-ketoacid undergoes a metal-dependent reduction by NADPH to yield (R)-2,3-dihydroxy-isovalerate. This Burkholderia ambifaria (strain MC40-6) protein is Ketol-acid reductoisomerase (NADP(+)).